The sequence spans 507 residues: FLYWCH transcription factor 1 (507 aa).

A compositionally biased stretch (low complexity) spans 1 to 26 (MYSPESMNSNISSPSPPSSSSLNAPS). Residues 1 to 51 (MYSPESMNSNISSPSPPSSSSLNAPSLADAPEVRSDDGEAETSEPSTSVTA) are disordered. An FLYWCH-type zinc finger spans residues 135–192 (KKTRLKVFSNGFFMTFDKLSSCQKKYFWRCEYKNTCKARMHTDIVTEKILTFIHEHNH).

Probable transcription factor. Binds to the DNA sequence motif 5'-[AG]GGCGCCG-3' in the promoters of target genes, including micro-RNA genes, in order to repress expression, and acting redundantly with flh-2. The sequence is that of FLYWCH transcription factor 1 from Caenorhabditis elegans.